The following is a 254-amino-acid chain: Inner membrane protein YabI (254 aa).

Residues 1–7 lie on the Periplasmic side of the membrane; that stretch reads MQALLEH. 2 consecutive transmembrane segments (helical) span residues 8-28 and 29-49; these read FITQ…FLES and LALV…GALI. The Periplasmic portion of the chain corresponds to 50–58; it reads GSGELSFWH. A helical membrane pass occupies residues 59 to 79; that stretch reads AWLAGIIGCLMGDWISFWLGW. The Cytoplasmic portion of the chain corresponds to 80-144; it reads RFKKPLHRWS…LPVAKFITPN (65 aa). Residues 145-165 form a helical membrane-spanning segment; the sequence is IIGCLLWPPFYFLPGILAGAA. Over 166–178 the chain is Periplasmic; it reads IDIPAGMQSGEFK. The chain crosses the membrane as a helical span at residues 179 to 199; sequence WLLLATAVFLWVGGWLCWRLW. At 200 to 215 the chain is on the cytoplasmic side; sequence RSGKATDRLSHYLSRG. A helical membrane pass occupies residues 216-236; it reads RLLWLTPLISAIGVVALVVLI. At 237–254 the chain is on the periplasmic side; it reads RHPLMPVYIDILRKVVGV.

It belongs to the DedA family.

Its subcellular location is the cell inner membrane. The chain is Inner membrane protein YabI (yabI) from Escherichia coli (strain K12).